Here is a 48-residue protein sequence, read N- to C-terminus: MRVKINLKCSSCGSKNYLTSKNKSNHPDKIEVPKYCPKERKVTLHIES.

Belongs to the bacterial ribosomal protein bL33 family.

This Streptococcus agalactiae serotype V (strain ATCC BAA-611 / 2603 V/R) protein is Large ribosomal subunit protein bL33A.